A 76-amino-acid polypeptide reads, in one-letter code: Exodeoxyribonuclease 7 small subunit (76 aa).

The protein belongs to the XseB family. Heterooligomer composed of large and small subunits.

Its subcellular location is the cytoplasm. The enzyme catalyses Exonucleolytic cleavage in either 5'- to 3'- or 3'- to 5'-direction to yield nucleoside 5'-phosphates.. Functionally, bidirectionally degrades single-stranded DNA into large acid-insoluble oligonucleotides, which are then degraded further into small acid-soluble oligonucleotides. In Bacillus mycoides (strain KBAB4) (Bacillus weihenstephanensis), this protein is Exodeoxyribonuclease 7 small subunit.